The sequence spans 85 residues: Small ribosomal subunit protein bS16 (85 aa).

The protein belongs to the bacterial ribosomal protein bS16 family.

The polypeptide is Small ribosomal subunit protein bS16 (Clostridium kluyveri (strain NBRC 12016)).